Here is a 60-residue protein sequence, read N- to C-terminus: UPF0181 protein ESA_01442 (60 aa).

This sequence belongs to the UPF0181 family.

The protein is UPF0181 protein ESA_01442 of Cronobacter sakazakii (strain ATCC BAA-894) (Enterobacter sakazakii).